Here is a 704-residue protein sequence, read N- to C-terminus: Zinc finger CCHC domain-containing protein 8 (704 aa).

The residue at position 2 (Ala-2) is an N-acetylalanine. Over residues Phe-16 to Asp-33 the composition is skewed to basic and acidic residues. Positions Phe-16 to Gly-43 are disordered. Positions Gly-43–Pro-78 form a coiled coil. The segment at Pro-225 to Met-242 adopts a CCHC-type zinc-finger fold. RBM7 binding stretches follow at residues Phe-284–Leu-297 and Phe-307–Lys-322. Position 340 is a phosphothreonine (Thr-340). Disordered stretches follow at residues Ala-407–Glu-516 and Leu-529–Cys-599. Residue Lys-411 forms a Glycyl lysine isopeptide (Lys-Gly) (interchain with G-Cter in SUMO2) linkage. Positions Ser-454 to Gln-463 are enriched in low complexity. Residues Pro-464–Thr-494 show a composition bias toward pro residues. 4 positions are modified to phosphothreonine: Thr-470, Thr-477, Thr-483, and Thr-490. Residues Thr-514 to Asp-538 adopt a coiled-coil conformation. Polar residues predominate over residues Leu-547 to Cys-557. Thr-575 bears the Phosphothreonine mark. The residue at position 596 (Ser-596) is a Phosphoserine. A Phosphothreonine modification is found at Thr-645. Phosphoserine occurs at positions 646, 655, and 692. Positions Pro-656 to Glu-704 are MTREX binding.

This sequence belongs to the ZCCHC8 family. Component of a nuclear TRAMP-like complex, an ATP-dependent exosome regulatory complex consisting of a helicase (MTREX), an oligadenylate polymerase (TENT4B or TENT4A), and a substrate specific RNA-binding factor (ZCCHC7 or ZCCHC8). Several TRAMP-like complexes exist with specific compositions and are associated with nuclear, or nucleolar RNA exosomes. Identified in the spliceosome C complex. Component of the nuclear exosome targeting (NEXT) complex composed of MTREX, ZCCHC8, and RBM7 that directs a subset of non-coding short-lived RNAs for exosomal degradation. Interacts with proteins involved in RNA processing and degradation such as MTREX and RBM7; interaction with MTREX enhances MTREX RNA helicase activity and bridges between RBM7 and MTREX. Interacts with TERC, the telomerase RNA component. In terms of processing, phosphorylation at Thr-490 by GSK3 is triggered in cells entering mitosis.

Its subcellular location is the nucleus. It localises to the nucleoplasm. Its function is as follows. Scaffolding subunit of the trimeric nuclear exosome targeting (NEXT) complex that is involved in the surveillance and turnover of aberrant transcripts and non-coding RNAs. NEXT functions as an RNA exosome cofactor that directs a subset of non-coding short-lived RNAs for exosomal degradation. May be involved in pre-mRNA splicing. It is required for 3'-end maturation of telomerase RNA component (TERC), TERC 3'-end targeting to the nuclear RNA exosome, and for telomerase function. The sequence is that of Zinc finger CCHC domain-containing protein 8 (ZCCHC8) from Pongo abelii (Sumatran orangutan).